We begin with the raw amino-acid sequence, 862 residues long: Phosphatidic acid phosphohydrolase 1 (862 aa).

The segment at 19-104 (NPATLSGAID…VPDELLVSPV (86 aa)) is N-LIP. Disordered stretches follow at residues 104–183 (VMSA…SVEE) and 300–341 (GSTL…AGSG). Residues 105–117 (MSATSSPPQSPET) are compositionally biased toward polar residues. Phosphoserine is present on residues serine 110 and serine 114. A compositionally biased stretch (basic and acidic residues) spans 132–143 (NENKKKEKKVLE). Composition is skewed to low complexity over residues 161-179 (SETT…TPPD) and 300-313 (GSTL…PSGS). Serine 168 bears the Phosphoserine mark. A DXDXT motif motif is present at residues 398–402 (DIDGT). Lysine 496 carries the N6-acetyllysine modification. Serine 511 carries the phosphoserine modification. Serine 602 carries the phosphoserine; by CDC28 modification. The disordered stretch occupies residues 648-732 (SDISNDDSDN…TPNKSTMSKG (85 aa)). Acidic residues predominate over residues 651–663 (SNDDSDNIDEDTD). Composition is skewed to polar residues over residues 664 to 679 (VSQQ…NSVK) and 687 to 699 (PQRN…NNNE). The segment covering 710-730 (ASDLVSSHSSSGSTPNKSTMS) has biased composition (low complexity). Threonine 723 bears the Phosphothreonine; by CDC28 mark. Serine 744 is subject to Phosphoserine; by CDC28. 3 positions are modified to phosphoserine: serine 748, serine 773, and serine 774. Residues 757-780 (MDDEDSNYNRTKSRRASSAAATSI) form a disordered region. Lysine 801 is subject to N6-acetyllysine. Residues 807-862 (DVHSLGNSDTESRREQSVNETGRNQLPHNSMDDKDLDSRVSDEFDDDEFDEDEFED) form a disordered region. Residues serine 810 and serine 814 each carry the phosphoserine modification. Residue threonine 816 is modified to Phosphothreonine. Polar residues predominate over residues 824–834 (VNETGRNQLPH). Over residues 836–848 (SMDDKDLDSRVSD) the composition is skewed to basic and acidic residues. Phosphoserine is present on residues serine 844 and serine 847. The span at 849–862 (EFDDDEFDEDEFED) shows a compositional bias: acidic residues.

The protein belongs to the lipin family. It depends on Mg(2+) as a cofactor. Post-translationally, acetylation at Lys-496 and Lys-801 by ESA1 promotes synthesis of diacylglycerol. In terms of processing, phosphorylated by CDC28 at the onset of mitosis, and dephosphorylated by the NEM1-SPO7 complex. Phosphorylation regulates recruitment on promoters of lipid biosynthetic enzymes.

The protein localises to the cytoplasm. The protein resides in the nucleus membrane. It is found in the endoplasmic reticulum membrane. The enzyme catalyses a 1,2-diacyl-sn-glycero-3-phosphate + H2O = a 1,2-diacyl-sn-glycerol + phosphate. With respect to regulation, phenylglyoxal and propranolol inhibit activity in dose-dependent manners with IC(50) values of 1.3 mM and 0.2 mM, respectively. Sertraline inhibits activity in a dose-dependent manner with an IC(50) value of 85 uM; the inhibitory effects of sertraline and propranolol are additive. In terms of biological role, mg(2+)-dependent phosphatidate (PA) phosphatase which catalyzes the dephosphorylation of PA to yield diacylglycerol. Required for de novo lipid synthesis and formation of lipid droplets. Controls transcription of phospholipid biosynthetic genes and nuclear structure by regulating the amount of membrane present at the nuclear envelope. Involved in plasmid maintenance, in respiration and in cell proliferation. In Saccharomyces cerevisiae (strain ATCC 204508 / S288c) (Baker's yeast), this protein is Phosphatidic acid phosphohydrolase 1 (PAH1).